The following is an 87-amino-acid chain: MAKFAAIVLLILVASATVNAVKEHDELPTTGMSRKILLQPVFKSLIISIAEGQQCVKKDELCIPYYLDCCEPLECKKVNWWDHKCIG.

The signal sequence occupies residues 1–20 (MAKFAAIVLLILVASATVNA). Residues 21 to 52 (VKEHDELPTTGMSRKILLQPVFKSLIISIAEG) constitute a propeptide that is removed on maturation. Gln53 is modified (pyrrolidone carboxylic acid). Disulfide bonds link Cys55–Cys70, Cys62–Cys75, and Cys69–Cys85.

As to expression, expressed in leaves (at protein level).

Its function is as follows. Peptide that strongly, but reversibly, suppresses the sweet taste-response to various sweeteners, including sugars, sweet amino acids and the artificial sweetener saccharin. In rodents, potentially binds to a sweet taste receptor present on apical microvilli of a subset of taste bud cells. Highly effective at blocking the sweet taste-response in rodents such as rats and mice, though mice may possess a mix of gurmarin-sensitive and -insensitive receptors. Has almost no effect on the sweet taste-response in humans. Inhibits Staphylococcus aureus biofilm formation without affecting bacterial viability. May be one of at least 9 different disulfide-rich peptides produced with varying properties. In Gymnema sylvestre (Gurmar), this protein is Pro-gurmarin.